Reading from the N-terminus, the 417-residue chain is Dibenzothiophene monooxygenase (417 aa).

Residues Tyr96, 129–134 (NASSEN), 159–163 (KHFCS), Arg282, 369–370 (AR), and His391 each bind FMN. The segment at 131-142 (SSENNSHVLDWK) is lid loop.

The protein belongs to the DszC flavin monooxygenase family. In terms of assembly, homotetramer. Homodimer. Requires FAD as cofactor. NADH is required as a cofactor.

Its subcellular location is the cytoplasm. The enzyme catalyses dibenzothiophene + 2 FMNH2 + 2 O2 = dibenzothiophene 5,5-dioxide + 2 FMN + 2 H2O + 2 H(+). It catalyses the reaction dibenzothiophene + FMNH2 + O2 = dibenzothiophene 5-oxide + FMN + H2O + H(+). The catalysed reaction is dibenzothiophene 5-oxide + FMNH2 + O2 = dibenzothiophene 5,5-dioxide + FMN + H2O + H(+). It participates in sulfur metabolism; dibenzothiophene degradation. In terms of biological role, catalyzes the first step of the '4S' desulfurization pathway that removes covalently bound sulfur from dibenzothiophene (DBT) without breaking carbon-carbon bonds. Sulfur dioxygenase which converts DBT to DBT-sulfone (DBTO2 or DBT 5,5-dioxide) in a stepwise manner. In DBTO (dibenzothiophene-5-oxide) was reported not to be a substrate, in it is reported to be a substrate. Can also use benzyl sulfide and benzyl sulfoxide as substrates, although benzyl sulfoxide is a poor substrate. The pathway substrate specificity has been augmented using mutagenesis, however no mutations allowed use of alkylated thiophenes. This chain is Dibenzothiophene monooxygenase, found in Rhodococcus qingshengii.